A 227-amino-acid chain; its full sequence is uncharacterized protein (227 aa).

This sequence to ORF5 in pFZ1.

This is an uncharacterized protein from Methanothermobacter thermautotrophicus (Methanobacterium thermoformicicum).